A 530-amino-acid polypeptide reads, in one-letter code: Probable histone-arginine methyltransferase CARMER (530 aa).

Positions 141-450 (ASQYFQFYGY…QSYDVTIDLH (310 aa)) constitute an SAM-dependent MTase PRMT-type domain. Residues Q154, R163, G187, E209, E238, and T266 each coordinate S-adenosyl-L-methionine. Position 501 is an asymmetric dimethylarginine; by autocatalysis (R501).

This sequence belongs to the class I-like SAM-binding methyltransferase superfamily. Protein arginine N-methyltransferase family. Homodimer. Interacts with EcR. Post-translationally, the dimethylated protein is the major form. Present ubiquitously (at protein level). Expressed in the imaginal disks and in larval brains, and to a much lesser degree in the polytene larval tissue such as salivary glands.

It is found in the cytoplasm. Its subcellular location is the nucleus. The enzyme catalyses L-arginyl-[protein] + 2 S-adenosyl-L-methionine = N(omega),N(omega)-dimethyl-L-arginyl-[protein] + 2 S-adenosyl-L-homocysteine + 2 H(+). Its function is as follows. Methylates (mono- and asymmetric dimethylation) the guanidino nitrogens of arginyl residues in proteins. May methylate histone H3 at 'Arg-17' and activate transcription via chromatin remodeling. Coordinates ecdysone-mediated expression of cell death genes. The protein is Probable histone-arginine methyltransferase CARMER (Art4) of Drosophila melanogaster (Fruit fly).